We begin with the raw amino-acid sequence, 353 residues long: GTPase Obg (353 aa).

The region spanning Met-1–Ile-159 is the Obg domain. The OBG-type G domain occupies Ala-160 to Gly-327. Residues Gly-166 to Ser-173, Phe-191 to His-195, Asp-212 to Gly-215, Asn-279 to Asp-282, and Ser-308 to Val-310 each bind GTP. The Mg(2+) site is built by Ser-173 and Thr-193.

This sequence belongs to the TRAFAC class OBG-HflX-like GTPase superfamily. OBG GTPase family. Monomer. It depends on Mg(2+) as a cofactor.

The protein resides in the cytoplasm. Its function is as follows. An essential GTPase which binds GTP, GDP and possibly (p)ppGpp with moderate affinity, with high nucleotide exchange rates and a fairly low GTP hydrolysis rate. Plays a role in control of the cell cycle, stress response, ribosome biogenesis and in those bacteria that undergo differentiation, in morphogenesis control. In Rhodopseudomonas palustris (strain ATCC BAA-98 / CGA009), this protein is GTPase Obg.